A 1500-amino-acid chain; its full sequence is Copper-transporting ATPase 1 (1500 aa).

Residues 1-653 (MDPSMGVNSV…KREIRQWRRS (653 aa)) lie on the Cytoplasmic side of the membrane. HMA domains follow at residues 8–74 (NSVT…FDAV) and 85–151 (TDTL…LDTG). The Cu(+) site is built by Thr-18, Cys-19, and Cys-22. Thr-152 carries the phosphothreonine modification. The 67-residue stretch at 171–237 (VVLKMKVEGM…QIEAMGFPAF (67 aa)) folds into the HMA 3 domain. Cu(+)-binding residues include Cys-182 and Cys-185. The residue at position 270 (Ser-270) is a Phosphoserine. One can recognise an HMA 4 domain in the interval 277 to 343 (STATFIIDGM…AIEAVSPGLY (67 aa)). Cu(+) is bound by residues Cys-288 and Cys-291. A Phosphothreonine modification is found at Thr-327. Residues Ser-339, Ser-353, Ser-357, and Ser-362 each carry the phosphoserine modification. 3 consecutive HMA domains span residues 377–443 (QETV…FDAT), 488–554 (SKCY…FGAT), and 564–630 (GVLE…FEAS). Positions 388, 391, 499, 502, 575, and 578 each coordinate Cu(+). Residues 654-675 (FLVSLFFCIPVMGLMIYMMVMD) traverse the membrane as a helical segment. Over 676–714 (HHFATLHHNQNMSKEEMINLHSSMFLERQILPGLSVMNL) the chain is Extracellular. Residue Asn-686 is glycosylated (N-linked (GlcNAc...) asparagine). Residues 715 to 734 (LSFLLCVPVQFFGGWYFYIQ) form a helical membrane-spanning segment. Residues 735-741 (AYKALKH) lie on the Cytoplasmic side of the membrane. Residues 742–762 (KTANMDVLIVLATTIAFAYSL) traverse the membrane as a helical segment. The Extracellular segment spans residues 763 to 781 (IILLVAMYERAKVNPITFF). The helical transmembrane segment at 782–802 (DTPPMLFVFIALGRWLEHIAK) threads the bilayer. Residues 803 to 936 (GKTSEALAKL…KAPIQQFADK (134 aa)) are Cytoplasmic-facing. Residues 937-959 (LSGYFVPFIVFVSIATLLVWIVI) traverse the membrane as a helical segment. Over 960-989 (GFLNFEIVETYFPGYNRSISRTETIIRFAF) the chain is Extracellular. Asn-975 is a glycosylation site (N-linked (GlcNAc...) asparagine). A helical transmembrane segment spans residues 990 to 1011 (QASITVLCIACPCSLGLATPTA). The Cytoplasmic segment spans residues 1012-1356 (VMVGTGVGAQ…LSRKTVKRIR (345 aa)). The active-site 4-aspartylphosphate intermediate is the Asp-1044. An ATP-binding site is contributed by Glu-1081. Phosphothreonine is present on Thr-1212. Mg(2+) is bound by residues Asp-1301 and Asp-1305. A helical transmembrane segment spans residues 1357 to 1374 (INFVFALIYNLVGIPIAA). Over 1375–1385 (GVFMPIGLVLQ) the chain is Extracellular. A helical membrane pass occupies residues 1386 to 1405 (PWMGSAAMAASSVSVVLSSL). The Cytoplasmic segment spans residues 1406–1500 (FLKLYRKPTY…DFREDDDTAL (95 aa)). Phosphoserine is present on residues Ser-1430, Ser-1432, Ser-1460, Ser-1463, and Ser-1466. Positions 1467-1468 (LL) match the Endocytosis signal motif. Phosphoserine is present on residues Ser-1469, Ser-1473, Ser-1476, and Ser-1486. The PDZD11-binding stretch occupies residues 1486–1500 (SLLVGDFREDDDTAL). The short motif at 1487-1488 (LL) is the Endocytosis signal element.

Belongs to the cation transport ATPase (P-type) (TC 3.A.3) family. Type IB subfamily. In terms of assembly, monomer. Interacts with PDZD11. Interacts with ATOX1 and COMMD1. Interacts with TYRP1. Directly interacts with SOD3; this interaction is copper-dependent and is required for SOD3 activity. In terms of tissue distribution, widely expressed including in heart, brain, lung, muscle, kidney, pancreas, and to a lesser extent placenta. Expressed in fibroblasts, aortic smooth muscle cells, aortic endothelial cells and umbilical vein endothelial cells (at protein level). Expressed in cerebellum and brain cortex.

The protein resides in the golgi apparatus. It localises to the trans-Golgi network membrane. Its subcellular location is the cell membrane. The protein localises to the melanosome membrane. It is found in the early endosome membrane. The protein resides in the cell projection. It localises to the axon. Its subcellular location is the dendrite. The protein localises to the postsynaptic density. It is found in the cytoplasm. The protein resides in the cytosol. It localises to the endoplasmic reticulum. The enzyme catalyses Cu(+)(in) + ATP + H2O = Cu(+)(out) + ADP + phosphate + H(+). ATP-driven copper (Cu(+)) ion pump that plays an important role in intracellular copper ion homeostasis. Within a catalytic cycle, acquires Cu(+) ion from donor protein on the cytoplasmic side of the membrane and delivers it to acceptor protein on the lumenal side. The transfer of Cu(+) ion across the membrane is coupled to ATP hydrolysis and is associated with a transient phosphorylation that shifts the pump conformation from inward-facing to outward-facing state. Under physiological conditions, at low cytosolic copper concentration, it is localized at the trans-Golgi network (TGN) where it transfers Cu(+) ions to cuproenzymes of the secretory pathway. Upon elevated cytosolic copper concentrations, it relocalizes to the plasma membrane where it is responsible for the export of excess Cu(+) ions. May play a dual role in neuron function and survival by regulating cooper efflux and neuronal transmission at the synapse as well as by supplying Cu(+) ions to enzymes such as PAM, TYR and SOD3. In the melanosomes of pigmented cells, provides copper cofactor to TYR to form an active TYR holoenzyme for melanin biosynthesis. In Homo sapiens (Human), this protein is Copper-transporting ATPase 1.